Consider the following 204-residue polypeptide: Proteasome subunit beta 1 (204 aa).

Positions 1-9 (MSYEYGTGA) are cleaved as a propeptide — removed in mature form; by autocatalysis. Threonine 10 acts as the Nucleophile in catalysis.

The protein belongs to the peptidase T1B family. The 20S proteasome core is composed of 14 alpha and 14 beta subunits that assemble into four stacked heptameric rings, resulting in a barrel-shaped structure. The two inner rings, each composed of seven catalytic beta subunits, are sandwiched by two outer rings, each composed of seven alpha subunits. The catalytic chamber with the active sites is on the inside of the barrel. Has a gated structure, the ends of the cylinder being occluded by the N-termini of the alpha-subunits. Is capped at one or both ends by the proteasome regulatory ATPase, PAN.

The protein resides in the cytoplasm. It catalyses the reaction Cleavage of peptide bonds with very broad specificity.. With respect to regulation, the formation of the proteasomal ATPase PAN-20S proteasome complex, via the docking of the C-termini of PAN into the intersubunit pockets in the alpha-rings, triggers opening of the gate for substrate entry. Interconversion between the open-gate and close-gate conformations leads to a dynamic regulation of the 20S proteasome proteolysis activity. Functionally, component of the proteasome core, a large protease complex with broad specificity involved in protein degradation. The sequence is that of Proteasome subunit beta 1 from Hyperthermus butylicus (strain DSM 5456 / JCM 9403 / PLM1-5).